The sequence spans 230 residues: MPEGGLIVAVDGPSGAGKSTVCRRIASMLGAKYLDTGAMYRVATLHVLRQGINPSDTTAVVQATRELPLSVNDDPASREVILDGEDVSNEIRGRLVTQNVSAVAAILEVRENLVALQRELAATAHRCVVDGRDIGSTVLVDAPVKIFLTASAEVRAQRRYDQDVAAGRLTDLATVLADVKRRDELDSNRSVSPLAPASDATVVDTSTLTLDQVVDTLMTLIEKSAERTAR.

Residue 12–20 (GPSGAGKST) participates in ATP binding.

This sequence belongs to the cytidylate kinase family. Type 1 subfamily.

It localises to the cytoplasm. It catalyses the reaction CMP + ATP = CDP + ADP. The enzyme catalyses dCMP + ATP = dCDP + ADP. The chain is Cytidylate kinase from Corynebacterium diphtheriae (strain ATCC 700971 / NCTC 13129 / Biotype gravis).